The sequence spans 434 residues: Solute carrier RCH1 (434 aa).

Topologically, residues 1–15 are cytoplasmic; it reads MKTQYSLIRKIWAHS. Residues 16–36 traverse the membrane as a helical segment; sequence VTEFLKSQWFFICLAILIVIA. Topologically, residues 37-50 are extracellular; the sequence is RFAPNFARDGGLIK. Residues 51 to 71 traverse the membrane as a helical segment; it reads GQYSIGYGCVAWIFLQSGLGM. At 72–87 the chain is on the cytoplasmic side; it reads KSRSLMANMLNWRAHA. The chain crosses the membrane as a helical span at residues 88–108; that stretch reads TILVLSFLITSSIVYGFCCAV. Topologically, residues 109 to 118 are extracellular; that stretch reads KAANDPKIDD. The chain crosses the membrane as a helical span at residues 119-139; sequence WVLIGLILTATCPTTVASNVI. Over 140–149 the chain is Cytoplasmic; it reads MTTNAGGNSL. A helical transmembrane segment spans residues 150–170; sequence LCVCEVFIGNLLGAFITPALV. Residues 171–199 are Extracellular-facing; it reads QMFTNRAPFAYGNPATGNGIGALYGRVMK. A helical transmembrane segment spans residues 200–220; sequence QVGLSVFVPLFVGQVIQNCFP. Topologically, residues 221–234 are cytoplasmic; it reads KGTAYYLGFLKKYH. The helical transmembrane segment at 235 to 255 threads the bilayer; the sequence is IKIGSYMLLLIMFSSFSTAFY. The Extracellular segment spans residues 256-264; it reads QDAFTSVSH. A helical transmembrane segment spans residues 265 to 285; that stretch reads VCIIFLCFFNLGIYIFFTGLS. Over 286–327 the chain is Cytoplasmic; the sequence is YLCARPWFILKLFPHEPIEGKSTRLYRYSYNIFRPFYYSKED. A helical transmembrane segment spans residues 328–348; it reads AICIMFCGPAKTAALGVSLIT. At 349 to 362 the chain is on the extracellular side; sequence SQYGDKKEHLGKLL. The chain crosses the membrane as a helical span at residues 363-383; that stretch reads VPLVLYQVEQVMTANFFVSLF. Topologically, residues 384-434 are cytoplasmic; the sequence is KRWIQKDAQADGSESSCANENEEVDLEKIISIGTGENQSVLSNNVPYTQPR. S425 carries the phosphoserine modification.

Belongs to the bile acid:sodium symporter (BASS) (TC 2.A.28) family.

It is found in the cell membrane. The protein localises to the bud neck. Its function is as follows. Solute carrier protein that negatively regulates the cytosolic calcium homeostasis in response to high levels of extracellular calcium. The sequence is that of Solute carrier RCH1 from Saccharomyces cerevisiae (strain ATCC 204508 / S288c) (Baker's yeast).